A 199-amino-acid chain; its full sequence is NADH-quinone oxidoreductase subunit C (199 aa).

This sequence belongs to the complex I 30 kDa subunit family. NDH-1 is composed of 14 different subunits. Subunits NuoB, C, D, E, F, and G constitute the peripheral sector of the complex.

It localises to the cell inner membrane. The enzyme catalyses a quinone + NADH + 5 H(+)(in) = a quinol + NAD(+) + 4 H(+)(out). Its function is as follows. NDH-1 shuttles electrons from NADH, via FMN and iron-sulfur (Fe-S) centers, to quinones in the respiratory chain. The immediate electron acceptor for the enzyme in this species is believed to be ubiquinone. Couples the redox reaction to proton translocation (for every two electrons transferred, four hydrogen ions are translocated across the cytoplasmic membrane), and thus conserves the redox energy in a proton gradient. This chain is NADH-quinone oxidoreductase subunit C, found in Cupriavidus taiwanensis (strain DSM 17343 / BCRC 17206 / CCUG 44338 / CIP 107171 / LMG 19424 / R1) (Ralstonia taiwanensis (strain LMG 19424)).